The chain runs to 290 residues: Expansin-A26 (290 aa).

Positions 1-29 (MDTTTTMAPLPLLTTTSLLLFFFLASSFA) are cleaved as a signal peptide. The tract at residues 45 to 67 (DGGGDGEGGGGGDGEGGGGGGGA) is disordered. Residues 101-196 (GGACGYKDAD…RKVACVRQGG (96 aa)) form the Expansin-like EG45 domain. The region spanning 206 to 286 (SYNMVMVKNV…DWTYDNTYQA (81 aa)) is the Expansin-like CBD domain. N250 carries an N-linked (GlcNAc...) asparagine glycan.

This sequence belongs to the expansin family. Expansin A subfamily. As to expression, expressed in flowers.

It is found in the secreted. The protein localises to the cell wall. The protein resides in the membrane. In terms of biological role, may cause loosening and extension of plant cell walls by disrupting non-covalent bonding between cellulose microfibrils and matrix glucans. No enzymatic activity has been found. May be required for rapid internodal elongation in deepwater rice during submergence. The chain is Expansin-A26 (EXPA26) from Oryza sativa subsp. japonica (Rice).